A 184-amino-acid polypeptide reads, in one-letter code: NADH-quinone oxidoreductase subunit B (184 aa).

[4Fe-4S] cluster is bound by residues Cys-37, Cys-38, Cys-103, and Cys-132.

Belongs to the complex I 20 kDa subunit family. NDH-1 is composed of 14 different subunits. Subunits NuoB, C, D, E, F, and G constitute the peripheral sector of the complex. [4Fe-4S] cluster is required as a cofactor.

The protein resides in the cell membrane. The catalysed reaction is a quinone + NADH + 5 H(+)(in) = a quinol + NAD(+) + 4 H(+)(out). Functionally, NDH-1 shuttles electrons from NADH, via FMN and iron-sulfur (Fe-S) centers, to quinones in the respiratory chain. The immediate electron acceptor for the enzyme in this species is believed to be a menaquinone. Couples the redox reaction to proton translocation (for every two electrons transferred, four hydrogen ions are translocated across the cytoplasmic membrane), and thus conserves the redox energy in a proton gradient. The sequence is that of NADH-quinone oxidoreductase subunit B from Mycobacterium marinum (strain ATCC BAA-535 / M).